Consider the following 197-residue polypeptide: Holliday junction branch migration complex subunit RuvA (197 aa).

The interval 1 to 64 (MIGHLEGRLR…EDAIQLYGFR (64 aa)) is domain I. Positions 65-143 (TVAEKDMFLR…VKKGREAEQP (79 aa)) are domain II. Residues 144 to 145 (AP) form a flexible linker region. Residues 146–197 (AAESSYGDAYSALVNLGYRPAEAEKALGKAIKSLGADPPVEKLLKETLRLLA) are domain III.

This sequence belongs to the RuvA family. As to quaternary structure, homotetramer. Forms an RuvA(8)-RuvB(12)-Holliday junction (HJ) complex. HJ DNA is sandwiched between 2 RuvA tetramers; dsDNA enters through RuvA and exits via RuvB. An RuvB hexamer assembles on each DNA strand where it exits the tetramer. Each RuvB hexamer is contacted by two RuvA subunits (via domain III) on 2 adjacent RuvB subunits; this complex drives branch migration. In the full resolvosome a probable DNA-RuvA(4)-RuvB(12)-RuvC(2) complex forms which resolves the HJ.

Its subcellular location is the cytoplasm. Functionally, the RuvA-RuvB-RuvC complex processes Holliday junction (HJ) DNA during genetic recombination and DNA repair, while the RuvA-RuvB complex plays an important role in the rescue of blocked DNA replication forks via replication fork reversal (RFR). RuvA specifically binds to HJ cruciform DNA, conferring on it an open structure. The RuvB hexamer acts as an ATP-dependent pump, pulling dsDNA into and through the RuvAB complex. HJ branch migration allows RuvC to scan DNA until it finds its consensus sequence, where it cleaves and resolves the cruciform DNA. In Syntrophobacter fumaroxidans (strain DSM 10017 / MPOB), this protein is Holliday junction branch migration complex subunit RuvA.